We begin with the raw amino-acid sequence, 56 residues long: LPAVSVDCSEYPKPDCTTEERPLCGSDNKTYGNKCNFCNAVVESNGTLTLSHFGKC.

One can recognise a Kazal-like domain in the interval 6–56; sequence VDCSEYPKPDCTTEERPLCGSDNKTYGNKCNFCNAVVESNGTLTLSHFGKC. Disulfide bonds link cysteine 8-cysteine 38, cysteine 16-cysteine 35, and cysteine 24-cysteine 56. Asparagine 45 carries N-linked (GlcNAc...) asparagine glycosylation.

The protein resides in the secreted. The chain is Ovomucoid from Francolinus pondicerianus (Grey francolin).